The primary structure comprises 445 residues: MALVDKHKVKRQRLDRICEGIRPQIMNGPLHPRPLVALLDGRDCTVEMPILKDLATVAFCDAQSTQEIHEKVLNEAVGAMMYHTITLTREDLEKFKALRVIVRIGSGYDNVDIKAAGELGIAVCNIPSAAVEETADSTVCHILNLYRRNTWLYQALREGTRVQSVEQIREVASGAARIRGETLGLIGFGRTGQAVAVRAKAFGFSVIFYDPYLQDGIERSLGVQRVYTLQDLLYQSDCVSLHCNLNEHNHHLINDFTIKQMRQGAFLVNAARGGLVDEKALAQALKEGRIRGAALDVHESEPFSFAQGPLKDAPNLICTPHTAWYSEQASLEMREAAATEIRRAITGRIPESLRNCVNKEFFVTSTPWSVIDQQAIHPELNGATYRYPPGIVGVAPGGLPPAMEGIIPGGIPVTHNLPTVAHPSQAPSPNQPTKHGDNREHPNEQ.

Arginine 22 bears the Asymmetric dimethylarginine mark. Residues serine 106, 186 to 191, aspartate 210, 243 to 249, 270 to 272, and aspartate 296 contribute to the NAD(+) site; these read IGFGRT, CNLNEHN, and AAR. The active site involves arginine 272. Glutamate 301 is an active-site residue. The active-site Proton donor is histidine 321. 321–324 provides a ligand contact to NAD(+); that stretch reads HTAW. The disordered stretch occupies residues 414–445; that stretch reads THNLPTVAHPSQAPSPNQPTKHGDNREHPNEQ. Serine 428 is modified (phosphoserine; by HIPK2). Basic and acidic residues predominate over residues 434–445; it reads KHGDNREHPNEQ.

Belongs to the D-isomer specific 2-hydroxyacid dehydrogenase family. Interacts with HIPK2, ZNF217 and PNN. Interacts with the transcription factors BKLF, delta EF1/AREB6/ZEB, EVI-1 and Friend of GATA (FOG) via the consensus motif P-X-[DNS]-L-[STVA]. Can form a complex with BKLF on a CACCC-box oligonucleotide. Can form homodimers or heterodimers of CTBP1 and CTBP2. Interacts with NRIP1 and WIZ. Interacts with PRDM16; represses white adipose tissue (WAT)-specific genes expression. Interacts with MCRIP1. Phosphorylation by HIPK2 on Ser-428 induces proteasomal degradation. Isoform 2 is specifically localized in synaptic ribbon (at protein level).

The protein localises to the nucleus. Its subcellular location is the synapse. Functionally, corepressor targeting diverse transcription regulators. Functions in brown adipose tissue (BAT) differentiation. Isoform 2 probably acts as a scaffold for specialized synapses. This chain is C-terminal-binding protein 2 (Ctbp2), found in Rattus norvegicus (Rat).